A 236-amino-acid polypeptide reads, in one-letter code: Protein-L-isoaspartate O-methyltransferase 1 (236 aa).

The active site involves serine 86.

Belongs to the methyltransferase superfamily. L-isoaspartyl/D-aspartyl protein methyltransferase family.

Its subcellular location is the cytoplasm. The catalysed reaction is [protein]-L-isoaspartate + S-adenosyl-L-methionine = [protein]-L-isoaspartate alpha-methyl ester + S-adenosyl-L-homocysteine. Its function is as follows. Catalyzes the methyl esterification of L-isoaspartyl residues in peptides and proteins that result from spontaneous decomposition of normal L-aspartyl and L-asparaginyl residues. It plays a role in the repair and/or degradation of damaged proteins. In Nitrosospira multiformis (strain ATCC 25196 / NCIMB 11849 / C 71), this protein is Protein-L-isoaspartate O-methyltransferase 1.